A 242-amino-acid chain; its full sequence is Prosalusin (242 aa).

Residues methionine 1–alanine 26 form the signal peptide. Positions alanine 27–tyrosine 189 are excised as a propeptide. Glycine 93 to serine 100 contacts ATP. A glycan (N-linked (GlcNAc...) asparagine) is linked at asparagine 149. Residues proline 210–glycine 242 form a disordered region. Positions arginine 225–proline 235 are enriched in low complexity. Lysine 241 carries the lysine amide modification.

It belongs to the ClpA/ClpB family. Torsin subfamily. Amidation of salusin-alpha(29-Gly) by peptidylglycine alpha-amidating monooxygenase, PAM, converts Lys-241-Gly-242 to Lys-241-NH2 and gives raise to salusin-alpha. As to expression, isoform 4 is ubiquitously expressed, with high level in vascular endothelial cells and vascular smooth muscle cells.

The protein localises to the secreted. In terms of biological role, salusins -alpha and -beta may be endocrine and/or paracrine factors able to increase intracellular calcium concentrations and induce cell mitogenesis. Salusins may also be potent hypotensive peptides. This chain is Prosalusin (TOR2A), found in Homo sapiens (Human).